Here is a 227-residue protein sequence, read N- to C-terminus: Phosphoribosylaminoimidazole-succinocarboxamide synthase (227 aa).

The protein belongs to the SAICAR synthetase family.

The catalysed reaction is 5-amino-1-(5-phospho-D-ribosyl)imidazole-4-carboxylate + L-aspartate + ATP = (2S)-2-[5-amino-1-(5-phospho-beta-D-ribosyl)imidazole-4-carboxamido]succinate + ADP + phosphate + 2 H(+). It participates in purine metabolism; IMP biosynthesis via de novo pathway; 5-amino-1-(5-phospho-D-ribosyl)imidazole-4-carboxamide from 5-amino-1-(5-phospho-D-ribosyl)imidazole-4-carboxylate: step 1/2. In Clostridium tetani (strain Massachusetts / E88), this protein is Phosphoribosylaminoimidazole-succinocarboxamide synthase.